The chain runs to 231 residues: Large ribosomal subunit protein uL1 (231 aa).

It belongs to the universal ribosomal protein uL1 family. Part of the 50S ribosomal subunit.

Binds directly to 23S rRNA. The L1 stalk is quite mobile in the ribosome, and is involved in E site tRNA release. Its function is as follows. Protein L1 is also a translational repressor protein, it controls the translation of the L11 operon by binding to its mRNA. The chain is Large ribosomal subunit protein uL1 from Caldanaerobacter subterraneus subsp. tengcongensis (strain DSM 15242 / JCM 11007 / NBRC 100824 / MB4) (Thermoanaerobacter tengcongensis).